The following is a 217-amino-acid chain: MTTGLDAELIEQGRKLFAGEWQFIWASPSIETLPPMSGLEVAFAGRSNVGKSSLINALTGRSALARTSRTPGRTQELIFFEGPKGVDVRLVDMPGYGFASAPKARIASWTSLIHQFLLGRATLARVYVLIDARHGIKDIDKTVLGALDRSAVSYQVVLTKADEVKVTEMAERIDITRTQLASHPAAFPDVLVTSSRTGNGIPELRAAMARLIGDHRR.

One can recognise an EngB-type G domain in the interval 37 to 214; that stretch reads SGLEVAFAGR…RAAMARLIGD (178 aa). Residues 45–52, 72–76, 92–95, 159–162, and 193–195 each bind GTP; these read GRSNVGKS, GRTQE, DMPG, TKAD, and TSS. Residues Ser-52 and Thr-74 each coordinate Mg(2+).

Belongs to the TRAFAC class TrmE-Era-EngA-EngB-Septin-like GTPase superfamily. EngB GTPase family. Mg(2+) is required as a cofactor.

Functionally, necessary for normal cell division and for the maintenance of normal septation. This is Probable GTP-binding protein EngB from Nitrobacter winogradskyi (strain ATCC 25391 / DSM 10237 / CIP 104748 / NCIMB 11846 / Nb-255).